Reading from the N-terminus, the 154-residue chain is Aminoalkylphosphonate N-acetyltransferase (154 aa).

The N-acetyltransferase domain occupies 14 to 154 (CELRHATTED…QSHFRFTKAL (141 aa)).

In terms of assembly, homodimer. Requires a divalent metal cation as cofactor.

It catalyses the reaction aminomethylphosphonate + acetyl-CoA = 2-N-acetamidomethylphosphonate + CoA. The catalysed reaction is (S)-1-aminoethylphosphonate + acetyl-CoA = [(1S)-1-acetamidoethyl]phosphonate + CoA. Its function is as follows. Aminoalkylphosphonate N-acetyltransferase which is able to acetylate a range of aminoalkylphosphonic acids, including (S)-1-aminoethylphosphonate ((S)-1AEP) and 2-aminoethylphosphonate, using acetyl-CoA as acetyl donor. Its physiological role in S.typhimurium is unclear. However, by acetylating (S)-1AEP, PhnO would protect against the deleterious effects of (S)-1AEP, a structural analog of D-alanine that has antibacterial properties. The protein is Aminoalkylphosphonate N-acetyltransferase of Salmonella typhimurium (strain LT2 / SGSC1412 / ATCC 700720).